A 713-amino-acid polypeptide reads, in one-letter code: Polyribonucleotide nucleotidyltransferase (713 aa).

2 residues coordinate Mg(2+): aspartate 498 and aspartate 504. One can recognise a KH domain in the interval 565–631 (PRILSLKVPV…RIEDLTREAK (67 aa)). The S1 motif domain occupies 633–701 (GEIYEGTVTR…ERGKIDLIRP (69 aa)).

It belongs to the polyribonucleotide nucleotidyltransferase family. Mg(2+) serves as cofactor.

It localises to the cytoplasm. The catalysed reaction is RNA(n+1) + phosphate = RNA(n) + a ribonucleoside 5'-diphosphate. In terms of biological role, involved in mRNA degradation. Catalyzes the phosphorolysis of single-stranded polyribonucleotides processively in the 3'- to 5'-direction. The polypeptide is Polyribonucleotide nucleotidyltransferase (Thermus thermophilus (strain ATCC 27634 / DSM 579 / HB8)).